The primary structure comprises 310 residues: MDPGNHSSVTESILAGLSEQPELQLRLFLLFLGICVVTVVGNLGMITLIGLSSHLHTPMYYFLSSLSFIDFCHSTVITPKMLVNFATEKNIISYPECMAQLYLFSIFAIAECHMLAAMAYDCYVAICSPLLYNVIMSYHHCFWLTVGVYILGILGSTIHTSFMLRLFLCKTNVINHYFCDLFPLLGLSCSSTYINELLVLVLSAFNILMPALTILASYIFIIASILRIHSTEGRSKAFSTCSSHILAVAVFFGSAAFMYLQPSSVSSMDQRKVSSVFYTTIVPMLNPLIYSLRNKDVKLAVKKILHQTAC.

Over 1-25 (MDPGNHSSVTESILAGLSEQPELQL) the chain is Extracellular. The N-linked (GlcNAc...) asparagine glycan is linked to Asn5. Residues 26-46 (RLFLLFLGICVVTVVGNLGMI) form a helical membrane-spanning segment. At 47 to 54 (TLIGLSSH) the chain is on the cytoplasmic side. Residues 55 to 75 (LHTPMYYFLSSLSFIDFCHST) form a helical membrane-spanning segment. Over 76 to 99 (VITPKMLVNFATEKNIISYPECMA) the chain is Extracellular. A disulfide bridge links Cys97 with Cys189. The helical transmembrane segment at 100 to 120 (QLYLFSIFAIAECHMLAAMAY) threads the bilayer. Residues 121-139 (DCYVAICSPLLYNVIMSYH) are Cytoplasmic-facing. A helical membrane pass occupies residues 140–160 (HCFWLTVGVYILGILGSTIHT). The Extracellular segment spans residues 161–197 (SFMLRLFLCKTNVINHYFCDLFPLLGLSCSSTYINEL). Residues 198 to 217 (LVLVLSAFNILMPALTILAS) traverse the membrane as a helical segment. At 218–237 (YIFIIASILRIHSTEGRSKA) the chain is on the cytoplasmic side. The chain crosses the membrane as a helical span at residues 238-258 (FSTCSSHILAVAVFFGSAAFM). At 259–271 (YLQPSSVSSMDQR) the chain is on the extracellular side. Residues 272–292 (KVSSVFYTTIVPMLNPLIYSL) traverse the membrane as a helical segment. Over 293–310 (RNKDVKLAVKKILHQTAC) the chain is Cytoplasmic.

This sequence belongs to the G-protein coupled receptor 1 family.

The protein resides in the cell membrane. In terms of biological role, odorant receptor. This is Olfactory receptor 8G3 from Homo sapiens (Human).